A 504-amino-acid polypeptide reads, in one-letter code: MSQFVDRVVLHLKAGDGGNGCNSVRREKFMPLGGPDGGNGGHGGDIVLEVDPQVHTLLDFRFSPHVRAERGNNGAGDDRHGARGKDLTLHVPPGTVVIDEDGEVLADLVSPGQKVIVAQGGFGGLGNASLASKTRKAPGFALLGEPGEQKDVTLELKSMADVGLVGFPSAGKSSLISVLSAAKPKIADYPFTTLAPNLGVVSVDHDTFTIADVPGLIPGASEGRGLGLDFLRHIERTAVLAHVVDAAALESERNPLDDIRALEHELDSYQSELSADAGLGDLRERPRVIILNKMDVPDAEDMADLQEEELKKFGWPIFRISTVARTGLNELRFALMDIVREHRKKVENTPEPQQVIRPQSVGPKRKGRFADFEVHEDKQNPGAFIVTGQKIDRWILQTDFENDEAIGFLADRLAKAGVEEALWQAGAVDGSEVTIGGITFEWDPQTVAGVDQTPAYGRGKDRRLEQTDRVTAEQRKRASQARRGLIDEYDYGDGEVAHTERWQG.

An Obg domain is found at 2–159 (SQFVDRVVLH…KDVTLELKSM (158 aa)). A disordered region spans residues 68-88 (AERGNNGAGDDRHGARGKDLT). The OBG-type G domain maps to 160–340 (ADVGLVGFPS…LRFALMDIVR (181 aa)). Residues 166–173 (GFPSAGKS), 191–195 (FTTLA), 212–215 (DVPG), 292–295 (NKMD), and 321–323 (STV) each bind GTP. 2 residues coordinate Mg(2+): S173 and T193. The 81-residue stretch at 364-444 (KRKGRFADFE…IGGITFEWDP (81 aa)) folds into the OCT domain. A disordered region spans residues 449-481 (GVDQTPAYGRGKDRRLEQTDRVTAEQRKRASQA). Residues 458–476 (RGKDRRLEQTDRVTAEQRK) are compositionally biased toward basic and acidic residues.

This sequence belongs to the TRAFAC class OBG-HflX-like GTPase superfamily. OBG GTPase family. As to quaternary structure, monomer. It depends on Mg(2+) as a cofactor.

It is found in the cytoplasm. An essential GTPase which binds GTP, GDP and possibly (p)ppGpp with moderate affinity, with high nucleotide exchange rates and a fairly low GTP hydrolysis rate. Plays a role in control of the cell cycle, stress response, ribosome biogenesis and in those bacteria that undergo differentiation, in morphogenesis control. The chain is GTPase Obg from Corynebacterium urealyticum (strain ATCC 43042 / DSM 7109).